The chain runs to 474 residues: Bifunctional protein HldE (474 aa).

The interval 1–317 is ribokinase; sequence MKLSMPRFDR…RRAVQREQGS (317 aa). Residue 194-197 coordinates ATP; sequence NLAE. Aspartate 263 is a catalytic residue. A cytidylyltransferase region spans residues 343–474; it reads FTNGCFDILH…GIVEKIRRQP (132 aa).

In the N-terminal section; belongs to the carbohydrate kinase PfkB family. This sequence in the C-terminal section; belongs to the cytidylyltransferase family. As to quaternary structure, homodimer.

The catalysed reaction is D-glycero-beta-D-manno-heptose 7-phosphate + ATP = D-glycero-beta-D-manno-heptose 1,7-bisphosphate + ADP + H(+). It catalyses the reaction D-glycero-beta-D-manno-heptose 1-phosphate + ATP + H(+) = ADP-D-glycero-beta-D-manno-heptose + diphosphate. It functions in the pathway nucleotide-sugar biosynthesis; ADP-L-glycero-beta-D-manno-heptose biosynthesis; ADP-L-glycero-beta-D-manno-heptose from D-glycero-beta-D-manno-heptose 7-phosphate: step 1/4. The protein operates within nucleotide-sugar biosynthesis; ADP-L-glycero-beta-D-manno-heptose biosynthesis; ADP-L-glycero-beta-D-manno-heptose from D-glycero-beta-D-manno-heptose 7-phosphate: step 3/4. Catalyzes the phosphorylation of D-glycero-D-manno-heptose 7-phosphate at the C-1 position to selectively form D-glycero-beta-D-manno-heptose-1,7-bisphosphate. In terms of biological role, catalyzes the ADP transfer from ATP to D-glycero-beta-D-manno-heptose 1-phosphate, yielding ADP-D-glycero-beta-D-manno-heptose. The protein is Bifunctional protein HldE of Azotobacter vinelandii (strain DJ / ATCC BAA-1303).